We begin with the raw amino-acid sequence, 299 residues long: UDP-N-acetylenolpyruvoylglucosamine reductase (299 aa).

In terms of domain architecture, FAD-binding PCMH-type spans 31–192 (VGGVAEVVFK…VDATFVGACG (162 aa)). Arginine 172 is an active-site residue. Catalysis depends on serine 221, which acts as the Proton donor. Glutamate 291 is a catalytic residue.

Belongs to the MurB family. It depends on FAD as a cofactor.

The protein resides in the cytoplasm. The catalysed reaction is UDP-N-acetyl-alpha-D-muramate + NADP(+) = UDP-N-acetyl-3-O-(1-carboxyvinyl)-alpha-D-glucosamine + NADPH + H(+). The protein operates within cell wall biogenesis; peptidoglycan biosynthesis. Its function is as follows. Cell wall formation. The sequence is that of UDP-N-acetylenolpyruvoylglucosamine reductase from Anaplasma marginale (strain St. Maries).